Consider the following 65-residue polypeptide: Large ribosomal subunit protein bL32 (65 aa).

Positions 1 to 19 (MAVQKSRKTPSKRGMRRSH) are enriched in basic residues. A disordered region spans residues 1 to 32 (MAVQKSRKTPSKRGMRRSHNALVKSTLSEDQE).

This sequence belongs to the bacterial ribosomal protein bL32 family.

This is Large ribosomal subunit protein bL32 from Vesicomyosocius okutanii subsp. Calyptogena okutanii (strain HA).